The chain runs to 62 residues: Venom protein 51.1 (62 aa).

An N-terminal signal peptide occupies residues 1–25 (MKFFGILLIVTMVVLVMIATTYVES). Intrachain disulfides connect Cys-32–Cys-53, Cys-39–Cys-58, and Cys-43–Cys-60.

As to expression, expressed by the venom gland.

The protein localises to the secreted. Neurotoxin. Decreases the action potential of myelinated nerves in mice and frogs. This is Venom protein 51.1 from Lychas mucronatus (Chinese swimming scorpion).